A 362-amino-acid polypeptide reads, in one-letter code: Probable peptidyl-prolyl cis-trans isomerase C27F1.06c (362 aa).

Ser-69 is subject to Phosphoserine. The disordered stretch occupies residues 144–274 (DEFSSDEEEM…KVKGDGPAAK (131 aa)). Composition is skewed to acidic residues over residues 146-167 (FSSD…EEEE) and 175-189 (LNSD…EEEI). The residue at position 177 (Ser-177) is a Phosphoserine. Basic and acidic residues predominate over residues 190–218 (LEKPVPKDEVAEKHSKDKLKKEEKEKKTA). One can recognise a PPIase FKBP-type domain in the interval 276–362 (KKRVSMRYIG…VFDVKLLAVN (87 aa)).

This sequence belongs to the FKBP-type PPIase family. FKBP3/4 subfamily.

It catalyses the reaction [protein]-peptidylproline (omega=180) = [protein]-peptidylproline (omega=0). In terms of biological role, PPIases accelerate the folding of proteins. It catalyzes the cis-trans isomerization of proline imidic peptide bonds in oligopeptides. The sequence is that of Probable peptidyl-prolyl cis-trans isomerase C27F1.06c from Schizosaccharomyces pombe (strain 972 / ATCC 24843) (Fission yeast).